Here is a 144-residue protein sequence, read N- to C-terminus: Ribosome-binding factor A (144 aa).

Positions 120 to 144 (DKRRMAESGREEDDAAPDETTEDNA) are disordered. Residues 129–144 (REEDDAAPDETTEDNA) show a composition bias toward acidic residues.

The protein belongs to the RbfA family. As to quaternary structure, monomer. Binds 30S ribosomal subunits, but not 50S ribosomal subunits or 70S ribosomes.

Its subcellular location is the cytoplasm. In terms of biological role, one of several proteins that assist in the late maturation steps of the functional core of the 30S ribosomal subunit. Associates with free 30S ribosomal subunits (but not with 30S subunits that are part of 70S ribosomes or polysomes). Required for efficient processing of 16S rRNA. May interact with the 5'-terminal helix region of 16S rRNA. This chain is Ribosome-binding factor A, found in Aeromonas hydrophila subsp. hydrophila (strain ATCC 7966 / DSM 30187 / BCRC 13018 / CCUG 14551 / JCM 1027 / KCTC 2358 / NCIMB 9240 / NCTC 8049).